The following is a 93-amino-acid chain: PqqA binding protein (93 aa).

The protein belongs to the PqqD family. Monomer. Interacts with PqqE.

It functions in the pathway cofactor biosynthesis; pyrroloquinoline quinone biosynthesis. Functionally, functions as a PqqA binding protein and presents PqqA to PqqE, in the pyrroloquinoline quinone (PQQ) biosynthetic pathway. The polypeptide is PqqA binding protein (Methylococcus capsulatus (strain ATCC 33009 / NCIMB 11132 / Bath)).